Reading from the N-terminus, the 394-residue chain is Phosphopentomutase (394 aa).

Mn(2+)-binding residues include D15, D288, H293, D329, H330, and H341.

It belongs to the phosphopentomutase family. It depends on Mn(2+) as a cofactor.

The protein localises to the cytoplasm. The catalysed reaction is 2-deoxy-alpha-D-ribose 1-phosphate = 2-deoxy-D-ribose 5-phosphate. The enzyme catalyses alpha-D-ribose 1-phosphate = D-ribose 5-phosphate. It participates in carbohydrate degradation; 2-deoxy-D-ribose 1-phosphate degradation; D-glyceraldehyde 3-phosphate and acetaldehyde from 2-deoxy-alpha-D-ribose 1-phosphate: step 1/2. Its function is as follows. Isomerase that catalyzes the conversion of deoxy-ribose 1-phosphate (dRib-1-P) and ribose 1-phosphate (Rib-1-P) to deoxy-ribose 5-phosphate (dRib-5-P) and ribose 5-phosphate (Rib-5-P), respectively. The chain is Phosphopentomutase from Bacillus pumilus (strain SAFR-032).